The chain runs to 313 residues: Elongation factor Ts (313 aa).

The segment at 82 to 85 (TDFV) is involved in Mg(2+) ion dislocation from EF-Tu.

It belongs to the EF-Ts family.

The protein resides in the cytoplasm. Its function is as follows. Associates with the EF-Tu.GDP complex and induces the exchange of GDP to GTP. It remains bound to the aminoacyl-tRNA.EF-Tu.GTP complex up to the GTP hydrolysis stage on the ribosome. This Nostoc sp. (strain PCC 7120 / SAG 25.82 / UTEX 2576) protein is Elongation factor Ts.